Consider the following 193-residue polypeptide: Potassium-transporting ATPase KdpC subunit (193 aa).

The chain crosses the membrane as a helical span at residues 14-34; that stretch reads ITFTFLVLCGLVYPLIVTGIA.

It belongs to the KdpC family. The system is composed of three essential subunits: KdpA, KdpB and KdpC.

The protein resides in the cell membrane. Part of the high-affinity ATP-driven potassium transport (or Kdp) system, which catalyzes the hydrolysis of ATP coupled with the electrogenic transport of potassium into the cytoplasm. This subunit acts as a catalytic chaperone that increases the ATP-binding affinity of the ATP-hydrolyzing subunit KdpB by the formation of a transient KdpB/KdpC/ATP ternary complex. The chain is Potassium-transporting ATPase KdpC subunit from Bacillus cereus (strain ATCC 14579 / DSM 31 / CCUG 7414 / JCM 2152 / NBRC 15305 / NCIMB 9373 / NCTC 2599 / NRRL B-3711).